The primary structure comprises 1149 residues: MHGTVSRSSSSSNMTDVSSPAGGAASPVEIATSSSTAATTSASASSSKPLTNGANKTAISTAAGVTPGAAPGPGCAAIPASGSSGNQVKLEHHYRQSNNNRPAGSNRSSETKLRSPAGESDGASRLMTPAGSSSSPSQSPSQSQSQSQASIQTQTSQQDRLVKAPSTTASQQDVDEVARLFEEKPEAFEKWLTERAPPEALSRLQEFIENRKPHKRPSVTSDLFQQWMAASPTVQQKSPRSLSNSSASSLPECRRHLMDLDEGELFMELIRDVANELDIDVLCHKILVNVGLLTHADRGSLFLAKGTPTNKYLVAKLFDVTQKTALKDAVTRASAEEIIIPFGIGIAGMVAQTKQMINIKEAYKDARFNCEIDLKTGYKTNAILCMPICNYEGDIIGVAQIINKTNGCMEFDEHDVEIFRRYLTFCGIGIQNAQLFEMSVQEYRRNQILLNLARSIFEEQNNLECLVTKIMTEARELLKCERCSVFLVDLDCCEASHLEKIIEKPNQPATRAIKSADSFEEKKMRNRFTVLFELGGEYQAANVSRPSVSELSSSTLAQIAQFVATTGQTVNICDVIEWVRDHNQIRAEDEIDSTQAILCMPIMNAQKKVIGVAQLINKANGVPFTESDASIFEAFAIFCGLGIHNTQMYENACKLMAKQKVALECLSYHATASQDQTEKLTQDAIAEAESYNLYSFTFTDFELVDDDTCRAVLRMFMQCNLVSQFQIPYDVLCRWVLSVRKNYRPVKYHNWRHALNVAQTMFAMLKTGKMERFMTDLEILGLLVACLCHDLDHRGTNNAFQTKTESPLAILYTTSTMEHHHFDQCVMILNSEGNNIFQALSPEDYRSVMKTVESAILSTDLAMYFKKRNAFLELVENGEFDWQGEEKKDLLCGMMMTACDVSAIAKPWEVQHKVAKLVADEFFDQGDLEKLQLNTQPVAMMDRERKDELPKMQVGFIDVICLPLYRVLCDTFPWITPLYEGTLENRRNWQDLAEKVEMGLTWIDHDTIDKPVEEFAACADEEIKDIEFTVTTLNCNQQSQHGSEDSHTPEHQRSGSRLSMKKTGALGKAVRSKLSKTLYNSMDGSKPKTSLKLLESHVSEDMDDKSPTSPSQPQASGSMGRMSASSSTSSAGGQMVDKSKKRSKLCALL.

Composition is skewed to low complexity over residues Met1–Ser19 and Ala31–Ser47. The tract at residues Met1 to Asp175 is disordered. Residues Lys48 to Ile59 are compositionally biased toward polar residues. A compositionally biased stretch (low complexity) spans Ser60–Gly85. Residues Gln96–Ser108 show a composition bias toward polar residues. Over residues Ser132–Gln158 the composition is skewed to low complexity. 2 GAF domains span residues Asp278 to Ile430 and Asn462 to Ile643. The 324-residue stretch at Ser673–Val996 folds into the PDEase domain. His749 (proton donor) is an active-site residue. Positions 753, 789, 790, and 900 each coordinate a divalent metal cation. Disordered stretches follow at residues Gln1037–Leu1066 and Ser1096–Leu1149. 2 stretches are compositionally biased toward basic and acidic residues: residues Gly1042–Arg1053 and Ser1096–Ser1106. A compositionally biased stretch (low complexity) spans Ala1115–Met1135. Basic residues predominate over residues Ser1139–Leu1149. Cys1146 carries the post-translational modification Cysteine methyl ester. Residue Cys1146 is the site of S-farnesyl cysteine attachment. Positions Ala1147–Leu1149 are cleaved as a propeptide — removed in mature form.

It belongs to the cyclic nucleotide phosphodiesterase family. Interacts with PrBP. The cofactor is a divalent metal cation.

It localises to the cell membrane. The enzyme catalyses 3',5'-cyclic GMP + H2O = GMP + H(+). Its function is as follows. Has a role regulating cGMP transport in Malpighian tubule principal cells. The chain is cGMP-specific 3',5'-cyclic phosphodiesterase from Drosophila yakuba (Fruit fly).